The chain runs to 582 residues: Adenine deaminase (582 aa).

Belongs to the metallo-dependent hydrolases superfamily. Adenine deaminase family. Mn(2+) is required as a cofactor.

It carries out the reaction adenine + H2O + H(+) = hypoxanthine + NH4(+). This chain is Adenine deaminase, found in Oceanobacillus iheyensis (strain DSM 14371 / CIP 107618 / JCM 11309 / KCTC 3954 / HTE831).